A 434-amino-acid chain; its full sequence is Homogentisate 1,2-dioxygenase (434 aa).

His-289 functions as the Proton acceptor in the catalytic mechanism. Positions 332 and 338 each coordinate Fe cation. Homogentisate is bound by residues Tyr-347 and His-368. A Fe cation-binding site is contributed by His-368.

The protein belongs to the homogentisate dioxygenase family. In terms of assembly, hexamer; dimer of trimers. It depends on Fe cation as a cofactor.

The enzyme catalyses homogentisate + O2 = 4-maleylacetoacetate + H(+). The protein operates within amino-acid degradation; L-phenylalanine degradation; acetoacetate and fumarate from L-phenylalanine: step 4/6. Involved in the catabolism of homogentisate (2,5-dihydroxyphenylacetate or 2,5-OH-PhAc), a central intermediate in the degradation of phenylalanine and tyrosine. Catalyzes the oxidative ring cleavage of the aromatic ring of homogentisate to yield maleylacetoacetate. In Pseudomonas syringae pv. syringae (strain B728a), this protein is Homogentisate 1,2-dioxygenase.